A 62-amino-acid polypeptide reads, in one-letter code: Sperm protamine P1 (62 aa).

The tract at residues 1-62 is disordered; that stretch reads MARYRRRSRS…RYSRRGRRRY (62 aa).

This sequence belongs to the protamine P1 family. Testis.

It is found in the nucleus. The protein resides in the chromosome. In terms of biological role, protamines substitute for histones in the chromatin of sperm during the haploid phase of spermatogenesis. They compact sperm DNA into a highly condensed, stable and inactive complex. This chain is Sperm protamine P1 (PRM1), found in Sarcophilus harrisii (Tasmanian devil).